A 343-amino-acid chain; its full sequence is Dihydroorotase (343 aa).

Zn(2+) is bound by residues His13 and His15. Residues His15–Arg17 and Asn41 contribute to the substrate site. Residues Lys99, His136, and His174 each contribute to the Zn(2+) site. Lys99 carries the post-translational modification N6-carboxylysine. A substrate-binding site is contributed by His136. Leu219 serves as a coordination point for substrate. Asp247 contributes to the Zn(2+) binding site. Asp247 is an active-site residue. Residues His251 and Ala263 each coordinate substrate.

The protein belongs to the metallo-dependent hydrolases superfamily. DHOase family. Class II DHOase subfamily. In terms of assembly, homodimer. Requires Zn(2+) as cofactor.

The catalysed reaction is (S)-dihydroorotate + H2O = N-carbamoyl-L-aspartate + H(+). The protein operates within pyrimidine metabolism; UMP biosynthesis via de novo pathway; (S)-dihydroorotate from bicarbonate: step 3/3. Its function is as follows. Catalyzes the reversible cyclization of carbamoyl aspartate to dihydroorotate. The sequence is that of Dihydroorotase from Alkalilimnicola ehrlichii (strain ATCC BAA-1101 / DSM 17681 / MLHE-1).